Consider the following 139-residue polypeptide: Toxin FitB (139 aa).

A PINc domain is found at 2–123 (ILLDTNVISE…HSLTVATRDT (122 aa)). Residues Asp5 and Asp104 each coordinate Mg(2+).

Belongs to the PINc/VapC protein family. As to quaternary structure, forms a heterodimer with FitA, 4 FitAB heterodimers form a complex that binds to promoter DNA. The complex is also seen in solution. This protein does not actually contact DNA. The cofactor is Mg(2+).

Its function is as follows. Toxic component of a type II toxin-antitoxin (TA) system. Plays a role in the speed with which bacteria traverse human epithelial cells; disruption of the locus increases the speed of trafficking about 2-4-fold. FitAB binds to its own promoter better than FitA alone. The expected nuclease activity was not observed for the FitAB complex, perhaps because FitA (the antitoxin) prevents metal binding and thus catalysis by FitB. The sequence is that of Toxin FitB (fitB) from Neisseria gonorrhoeae (strain ATCC 700825 / FA 1090).